The chain runs to 121 residues: Large ribosomal subunit protein bL12 (121 aa).

It belongs to the bacterial ribosomal protein bL12 family. In terms of assembly, homodimer. Part of the ribosomal stalk of the 50S ribosomal subunit. Forms a multimeric L10(L12)X complex, where L10 forms an elongated spine to which 2 to 4 L12 dimers bind in a sequential fashion. Binds GTP-bound translation factors.

Functionally, forms part of the ribosomal stalk which helps the ribosome interact with GTP-bound translation factors. Is thus essential for accurate translation. This chain is Large ribosomal subunit protein bL12, found in Clostridium perfringens (strain ATCC 13124 / DSM 756 / JCM 1290 / NCIMB 6125 / NCTC 8237 / Type A).